We begin with the raw amino-acid sequence, 134 residues long: ATP synthase epsilon chain (134 aa).

Belongs to the ATPase epsilon chain family. As to quaternary structure, F-type ATPases have 2 components, CF(1) - the catalytic core - and CF(0) - the membrane proton channel. CF(1) has five subunits: alpha(3), beta(3), gamma(1), delta(1), epsilon(1). CF(0) has three main subunits: a, b and c.

The protein localises to the cell inner membrane. Functionally, produces ATP from ADP in the presence of a proton gradient across the membrane. The protein is ATP synthase epsilon chain of Rhodospirillum rubrum (strain ATCC 11170 / ATH 1.1.1 / DSM 467 / LMG 4362 / NCIMB 8255 / S1).